Consider the following 378-residue polypeptide: Ribosomal RNA large subunit methyltransferase G (378 aa).

This sequence belongs to the methyltransferase superfamily. RlmG family.

The protein localises to the cytoplasm. The enzyme catalyses guanosine(1835) in 23S rRNA + S-adenosyl-L-methionine = N(2)-methylguanosine(1835) in 23S rRNA + S-adenosyl-L-homocysteine + H(+). Specifically methylates the guanine in position 1835 (m2G1835) of 23S rRNA. In Citrobacter koseri (strain ATCC BAA-895 / CDC 4225-83 / SGSC4696), this protein is Ribosomal RNA large subunit methyltransferase G.